Here is a 179-residue protein sequence, read N- to C-terminus: Large ribosomal subunit protein bL17 (179 aa).

The span at 123–161 shows a compositional bias: basic and acidic residues; that stretch reads KEKDTKKKDDSKKSDDKKTSKKEAGFKSSKGESEHKKNT. The segment at 123 to 179 is disordered; that stretch reads KEKDTKKKDDSKKSDDKKTSKKEAGFKSSKGESEHKKNTDQVVDSSSNRRYNRVKGS. The span at 162–171 shows a compositional bias: polar residues; the sequence is DQVVDSSSNR.

Belongs to the bacterial ribosomal protein bL17 family. As to quaternary structure, part of the 50S ribosomal subunit. Contacts protein L32.

This Treponema denticola (strain ATCC 35405 / DSM 14222 / CIP 103919 / JCM 8153 / KCTC 15104) protein is Large ribosomal subunit protein bL17.